The chain runs to 302 residues: Protoheme IX farnesyltransferase (302 aa).

The next 9 helical transmembrane spans lie at 26-46 (VVVL…PGQV), 48-68 (WVAL…AAAL), 98-118 (VLGF…LWIN), 120-140 (LTAA…TLYL), 148-168 (IVIG…AVTG), 174-194 (ALLL…ALAV), 221-241 (ILLY…TFMG), 244-264 (LYLA…VRLL), and 280-300 (IIYL…PVWL).

It belongs to the UbiA prenyltransferase family. Protoheme IX farnesyltransferase subfamily.

Its subcellular location is the cell inner membrane. It carries out the reaction heme b + (2E,6E)-farnesyl diphosphate + H2O = Fe(II)-heme o + diphosphate. It functions in the pathway porphyrin-containing compound metabolism; heme O biosynthesis; heme O from protoheme: step 1/1. Its function is as follows. Converts heme B (protoheme IX) to heme O by substitution of the vinyl group on carbon 2 of heme B porphyrin ring with a hydroxyethyl farnesyl side group. The sequence is that of Protoheme IX farnesyltransferase from Alkalilimnicola ehrlichii (strain ATCC BAA-1101 / DSM 17681 / MLHE-1).